Reading from the N-terminus, the 142-residue chain is Large ribosomal subunit protein uL13 (142 aa).

It belongs to the universal ribosomal protein uL13 family. In terms of assembly, part of the 50S ribosomal subunit.

In terms of biological role, this protein is one of the early assembly proteins of the 50S ribosomal subunit, although it is not seen to bind rRNA by itself. It is important during the early stages of 50S assembly. In Histophilus somni (strain 129Pt) (Haemophilus somnus), this protein is Large ribosomal subunit protein uL13.